Here is a 256-residue protein sequence, read N- to C-terminus: 4-hydroxy-tetrahydrodipicolinate reductase (256 aa).

Residue 8–13 coordinates NAD(+); sequence GASGKM. Lys-36 serves as a coordination point for NADP(+). Residues 87–89 and 111–114 contribute to the NAD(+) site; these read GTT and ATNM. The Proton donor/acceptor role is filled by His-143. Position 144 (His-144) interacts with (S)-2,3,4,5-tetrahydrodipicolinate. Lys-147 acts as the Proton donor in catalysis. A (S)-2,3,4,5-tetrahydrodipicolinate-binding site is contributed by 153-154; it reads GT.

The protein belongs to the DapB family.

It is found in the cytoplasm. It catalyses the reaction (S)-2,3,4,5-tetrahydrodipicolinate + NAD(+) + H2O = (2S,4S)-4-hydroxy-2,3,4,5-tetrahydrodipicolinate + NADH + H(+). It carries out the reaction (S)-2,3,4,5-tetrahydrodipicolinate + NADP(+) + H2O = (2S,4S)-4-hydroxy-2,3,4,5-tetrahydrodipicolinate + NADPH + H(+). The protein operates within amino-acid biosynthesis; L-lysine biosynthesis via DAP pathway; (S)-tetrahydrodipicolinate from L-aspartate: step 4/4. Functionally, catalyzes the conversion of 4-hydroxy-tetrahydrodipicolinate (HTPA) to tetrahydrodipicolinate. The polypeptide is 4-hydroxy-tetrahydrodipicolinate reductase (Campylobacter concisus (strain 13826)).